Reading from the N-terminus, the 353-residue chain is Photosystem II D2 protein (353 aa).

Thr2 is subject to N-acetylthreonine. A Phosphothreonine modification is found at Thr2. Residues 41–61 (CAYFALGGWFTGTTFVTSWYT) form a helical membrane-spanning segment. Residue His118 coordinates chlorophyll a. A helical transmembrane segment spans residues 125–141 (GFMLRQFELARSVQLRP). The pheophytin a site is built by Gln130 and Asn143. Residues 153–166 (VFVSVSLIYPLGQA) form a helical membrane-spanning segment. His198 contributes to the chlorophyll a binding site. The chain crosses the membrane as a helical span at residues 208 to 228 (AALLCAIHGATVENTLFEDGD). Residues His215 and Phe262 each coordinate a plastoquinone. His215 serves as a coordination point for Fe cation. His269 lines the Fe cation pocket. A helical transmembrane segment spans residues 279–295 (GLWMSAIGVVGLALNLR).

The protein belongs to the reaction center PufL/M/PsbA/D family. In terms of assembly, PSII is composed of 1 copy each of membrane proteins PsbA, PsbB, PsbC, PsbD, PsbE, PsbF, PsbH, PsbI, PsbJ, PsbK, PsbL, PsbM, PsbT, PsbX, PsbY, PsbZ, Psb30/Ycf12, at least 3 peripheral proteins of the oxygen-evolving complex and a large number of cofactors. It forms dimeric complexes. Requires The D1/D2 heterodimer binds P680, chlorophylls that are the primary electron donor of PSII, and subsequent electron acceptors. It shares a non-heme iron and each subunit binds pheophytin, quinone, additional chlorophylls, carotenoids and lipids. There is also a Cl(-1) ion associated with D1 and D2, which is required for oxygen evolution. The PSII complex binds additional chlorophylls, carotenoids and specific lipids. as cofactor.

It is found in the plastid. It localises to the chloroplast thylakoid membrane. The enzyme catalyses 2 a plastoquinone + 4 hnu + 2 H2O = 2 a plastoquinol + O2. In terms of biological role, photosystem II (PSII) is a light-driven water:plastoquinone oxidoreductase that uses light energy to abstract electrons from H(2)O, generating O(2) and a proton gradient subsequently used for ATP formation. It consists of a core antenna complex that captures photons, and an electron transfer chain that converts photonic excitation into a charge separation. The D1/D2 (PsbA/PsbD) reaction center heterodimer binds P680, the primary electron donor of PSII as well as several subsequent electron acceptors. D2 is needed for assembly of a stable PSII complex. This is Photosystem II D2 protein from Angiopteris evecta (Mule's foot fern).